The sequence spans 34 residues: Tau-theraphotoxin-Pc1c (34 aa).

Cystine bridges form between C2–C16, C9–C21, and C15–C28. A Phenylalanine amide modification is found at F34.

It belongs to the neurotoxin 10 (Hwtx-1) family. 62 (Vatx) subfamily. As to expression, expressed by the venom gland.

The protein localises to the secreted. In terms of biological role, selectively activates mammalian TRPV1, or capsaicin receptor, a non-selective cation channel expressed by sensory neurons of the pain pathway. Is more potent than VaTx1 and VaTx2. Interacts with distinct regions of the channel than capsaicin, since it only acts on the extracellular face of the channel, and capsaicin binds to the cytosolic side. Also activates avian TRPV1, which is insensitive to capsaicin. In mice, elicits pain-related behaviors, such as licking and flinching of the affected limb. The paw of toxin-injected mice shows substantial edema. The polypeptide is Tau-theraphotoxin-Pc1c (Psalmopoeus cambridgei (Trinidad chevron tarantula)).